The chain runs to 336 residues: Ventral anterior homeobox 1 (336 aa).

The segment covering Met-1 to Gly-34 has biased composition (basic and acidic residues). 2 disordered regions span residues Met-1 to Leu-39 and Ala-50 to Ala-69. The segment at residues Pro-100–Gln-159 is a DNA-binding region (homeobox). Low complexity predominate over residues Pro-236–Gly-250. Disordered stretches follow at residues Pro-236–Ala-267 and Ser-316–Asp-336. Basic and acidic residues predominate over residues Asn-325–Asp-336.

It belongs to the EMX homeobox family.

It localises to the nucleus. In terms of biological role, transcription factor that may function in dorsoventral specification of the forebrain. Required for axon guidance and major tract formation in the developing forebrain. May contribute to the differentiation of the neuroretina, pigmented epithelium and optic stalk. The protein is Ventral anterior homeobox 1 (Vax1) of Rattus norvegicus (Rat).